A 325-amino-acid chain; its full sequence is Beta-ketoacyl-[acyl-carrier-protein] synthase III (325 aa).

Catalysis depends on residues Cys112 and His250. Positions Gln251–Arg255 are ACP-binding. The active site involves Asn280.

It belongs to the thiolase-like superfamily. FabH family. As to quaternary structure, homodimer.

It is found in the cytoplasm. It carries out the reaction malonyl-[ACP] + acetyl-CoA + H(+) = 3-oxobutanoyl-[ACP] + CO2 + CoA. The protein operates within lipid metabolism; fatty acid biosynthesis. In terms of biological role, catalyzes the condensation reaction of fatty acid synthesis by the addition to an acyl acceptor of two carbons from malonyl-ACP. Catalyzes the first condensation reaction which initiates fatty acid synthesis and may therefore play a role in governing the total rate of fatty acid production. Possesses both acetoacetyl-ACP synthase and acetyl transacylase activities. Its substrate specificity determines the biosynthesis of branched-chain and/or straight-chain of fatty acids. The polypeptide is Beta-ketoacyl-[acyl-carrier-protein] synthase III (Lactococcus lactis subsp. lactis (strain IL1403) (Streptococcus lactis)).